Here is a 219-residue protein sequence, read N- to C-terminus: Protoglabretal synthase ISM2 (219 aa).

The next 5 membrane-spanning stretches (helical) occupy residues 26 to 46, 59 to 79, 112 to 132, 144 to 164, and 178 to 198; these read VHAWNGAATFLVMYGIWVLAG, LMIWWAVSGLIHIIHEGYWLF, AVVGIEGIAVIIVGPASLFAV, ILQLALALVQFYGSTLYFITA, and YYKYFIAQGGTWLLFPALIII. One can recognise an EXPERA domain in the interval 55–197; it reads TDKWLMIWWA…TWLLFPALII (143 aa).

The protein belongs to the EBP family.

It is found in the membrane. It carries out the reaction 7,8-epoxymelianol = protoglabretal. The protein operates within secondary metabolite biosynthesis; terpenoid biosynthesis. In terms of biological role, isomerase involved in the biosynthesis of glabretanes triterpene natural products such as glabretal, a component with in vitro antiproliferative properties on lymphocytes. Catalyzes the conversion of 7,8-epoxymelianol to protoglabretal via skeletal rearrangements. This Ailanthus altissima (Tree-of-heaven) protein is Protoglabretal synthase ISM2.